Reading from the N-terminus, the 175-residue chain is Ribosome maturation factor RimM (175 aa).

The region spanning 97–169 is the PRC barrel domain; that stretch reads EDKFYFHEII…TVRVITPEGL (73 aa).

It belongs to the RimM family. In terms of assembly, binds ribosomal protein uS19.

Its subcellular location is the cytoplasm. Its function is as follows. An accessory protein needed during the final step in the assembly of 30S ribosomal subunit, possibly for assembly of the head region. Essential for efficient processing of 16S rRNA. May be needed both before and after RbfA during the maturation of 16S rRNA. It has affinity for free ribosomal 30S subunits but not for 70S ribosomes. This chain is Ribosome maturation factor RimM, found in Christiangramia forsetii (strain DSM 17595 / CGMCC 1.15422 / KT0803) (Gramella forsetii).